We begin with the raw amino-acid sequence, 207 residues long: FMN-dependent NADH:quinone oxidoreductase 2 (207 aa).

FMN is bound by residues Ser9, 15-17 (SAS), and 97-100 (MWNF).

Belongs to the azoreductase type 1 family. Homodimer. Requires FMN as cofactor.

The catalysed reaction is 2 a quinone + NADH + H(+) = 2 a 1,4-benzosemiquinone + NAD(+). It catalyses the reaction N,N-dimethyl-1,4-phenylenediamine + anthranilate + 2 NAD(+) = 2-(4-dimethylaminophenyl)diazenylbenzoate + 2 NADH + 2 H(+). Its function is as follows. Quinone reductase that provides resistance to thiol-specific stress caused by electrophilic quinones. Also exhibits azoreductase activity. Catalyzes the reductive cleavage of the azo bond in aromatic azo compounds to the corresponding amines. The chain is FMN-dependent NADH:quinone oxidoreductase 2 from Burkholderia lata (strain ATCC 17760 / DSM 23089 / LMG 22485 / NCIMB 9086 / R18194 / 383).